An 88-amino-acid chain; its full sequence is Co-chaperonin GroES (88 aa).

The protein belongs to the GroES chaperonin family. As to quaternary structure, heptamer of 7 subunits arranged in a ring. Interacts with the chaperonin GroEL.

It is found in the cytoplasm. Its function is as follows. Together with the chaperonin GroEL, plays an essential role in assisting protein folding. The GroEL-GroES system forms a nano-cage that allows encapsulation of the non-native substrate proteins and provides a physical environment optimized to promote and accelerate protein folding. GroES binds to the apical surface of the GroEL ring, thereby capping the opening of the GroEL channel. The chain is Co-chaperonin GroES from Thermodesulfovibrio yellowstonii (strain ATCC 51303 / DSM 11347 / YP87).